The sequence spans 279 residues: Large ribosomal subunit protein uL2 (279 aa).

2 disordered regions span residues 33 to 58 (LLAPLPKKGGRNAHGRITTRHQGGGH) and 223 to 279 (GVAM…RKRG). 2 stretches are compositionally biased toward basic residues: residues 40–58 (KGGRNAHGRITTRHQGGGH) and 269–279 (VRRRYATRKRG).

This sequence belongs to the universal ribosomal protein uL2 family. In terms of assembly, part of the 50S ribosomal subunit. Forms a bridge to the 30S subunit in the 70S ribosome.

Its function is as follows. One of the primary rRNA binding proteins. Required for association of the 30S and 50S subunits to form the 70S ribosome, for tRNA binding and peptide bond formation. It has been suggested to have peptidyltransferase activity; this is somewhat controversial. Makes several contacts with the 16S rRNA in the 70S ribosome. The protein is Large ribosomal subunit protein uL2 of Salinispora arenicola (strain CNS-205).